The primary structure comprises 361 residues: Ferredoxin--NADP reductase 1 (361 aa).

The FAD site is built by Asp-44, Gln-52, Tyr-57, Ala-97, Phe-142, Asp-308, and Ser-349.

This sequence belongs to the ferredoxin--NADP reductase type 2 family. Homodimer. It depends on FAD as a cofactor.

It catalyses the reaction 2 reduced [2Fe-2S]-[ferredoxin] + NADP(+) + H(+) = 2 oxidized [2Fe-2S]-[ferredoxin] + NADPH. The protein is Ferredoxin--NADP reductase 1 of Cupriavidus necator (strain ATCC 17699 / DSM 428 / KCTC 22496 / NCIMB 10442 / H16 / Stanier 337) (Ralstonia eutropha).